A 172-amino-acid chain; its full sequence is Adenine phosphoribosyltransferase (172 aa).

This sequence belongs to the purine/pyrimidine phosphoribosyltransferase family. Homodimer.

The protein resides in the cytoplasm. It carries out the reaction AMP + diphosphate = 5-phospho-alpha-D-ribose 1-diphosphate + adenine. The protein operates within purine metabolism; AMP biosynthesis via salvage pathway; AMP from adenine: step 1/1. In terms of biological role, catalyzes a salvage reaction resulting in the formation of AMP, that is energically less costly than de novo synthesis. The chain is Adenine phosphoribosyltransferase from Anaeromyxobacter dehalogenans (strain 2CP-1 / ATCC BAA-258).